The chain runs to 76 residues: Small ribosomal subunit protein bS18 (76 aa).

The protein belongs to the bacterial ribosomal protein bS18 family. In terms of assembly, part of the 30S ribosomal subunit. Forms a tight heterodimer with protein bS6.

Its function is as follows. Binds as a heterodimer with protein bS6 to the central domain of the 16S rRNA, where it helps stabilize the platform of the 30S subunit. The polypeptide is Small ribosomal subunit protein bS18 (Nitrosomonas eutropha (strain DSM 101675 / C91 / Nm57)).